A 465-amino-acid polypeptide reads, in one-letter code: Transposase for insertion sequence IS1202 (465 aa).

An Integrase catalytic domain is found at 157-340; that stretch reads HPSRPRKKFA…APNPSERNLI (184 aa).

Its function is as follows. Required for the transposition of the insertion element. The sequence is that of Transposase for insertion sequence IS1202 from Streptococcus pneumoniae.